A 179-amino-acid chain; its full sequence is MISYEFQTHLPKGKDSSLNASSENKELYVQATHFNNTILLQIRLNGEMDSTYEVSSKGLNPILDINVPLAGNLGNTGGDYDDEEEEFVRDHLSDYQVVTKLGDSADPKVPVVCVQIAELYRRVILPEVSGTMAQDNMQFSLLISMSSKIWRATKEQSADDNDFGKLVFVLKCIKDMYAK.

Belongs to the PSMG3 family. Component of the 20S proteasome chaperone. Forms a heterodimer with POC4 that binds to proteasome precursors. Interacts with POP2.

Functionally, involved in 20S proteasome assembly, facilitating the alpha-ring formation. This Saccharomyces cerevisiae (strain ATCC 204508 / S288c) (Baker's yeast) protein is Proteasome chaperone 3 (IRC25).